The chain runs to 837 residues: Striatin-interacting protein 1 (837 aa).

An N-acetylmethionine modification is found at Met-1. Disordered regions lie at residues 1–67 (MEPA…ESPD) and 333–423 (AASP…KGLP). Residues 18–35 (PQPPPPPPPATAQPPPGA) show a composition bias toward pro residues. Residues 47–60 (KAREFNRNQRKDSE) show a composition bias toward basic and acidic residues. Residues Ser-59, Ser-335, and Ser-339 each carry the phosphoserine modification. Basic and acidic residues predominate over residues 356 to 377 (KALIKQDNLDAFNERDPYKADD). The span at 378–391 (SREEEEENDDDSSL) shows a compositional bias: acidic residues. Phosphoserine is present on Ser-788. Residues 796–837 (DNCLQSVLGQRVDLPEDFQMNYDLWLEREVFSKPISWEELLQ) are required for STRIPAK core complex formation.

Belongs to the STRIP family. Part of the core of STRIPAK complexes composed of PP2A catalytic and scaffolding subunits, the striatins (PP2A regulatory subunits), the striatin-associated proteins MOB4, STRIP1 and STRIP2, PDCD10 and members of the STE20 kinases, such as STK24 and STK26. The STRIPAK complex can be extended by adapter proteins such as SLMAP:SIKE1, CTTNBP2 or CTTNBP2NL. Interacts with CDC42BPB. Interacts with CTTNBP2NL.

It localises to the cytoplasm. Plays a role in the regulation of cell morphology and cytoskeletal organization. Required in the cortical actin filament dynamics and cell shape. Part of the striatin-interacting phosphatase and kinase (STRIPAK) complexes. STRIPAK complexes have critical roles in protein (de)phosphorylation and are regulators of multiple signaling pathways including Hippo, MAPK, nuclear receptor and cytoskeleton remodeling. Different types of STRIPAK complexes are involved in a variety of biological processes such as cell growth, differentiation, apoptosis, metabolism and immune regulation. The protein is Striatin-interacting protein 1 (Strip1) of Mus musculus (Mouse).